Consider the following 252-residue polypeptide: Ciliogenesis and planar polarity effector 2 (252 aa).

Positions 46–252 (QMNVDLVRYK…LRETSSEIIV (207 aa)) are small GTPase-like. GTP is bound by residues 62–67 (TGVGKS) and 173–176 (TKFD).

It belongs to the small GTPase superfamily. Rab family.

It localises to the cytoplasm. Its subcellular location is the cytoskeleton. It is found in the cilium basal body. Potential effector of the planar cell polarity signaling pathway. Plays a role in targeted membrane trafficking most probably at the level of vesicle fusion with membranes. Involved in cilium biogenesis by regulating the transport of cargo proteins to the basal body and to the apical tips of cilia. More generally involved in exocytosis in secretory cells. The protein is Ciliogenesis and planar polarity effector 2 (cplane2) of Danio rerio (Zebrafish).